Here is a 763-residue protein sequence, read N- to C-terminus: Protein translocase subunit SecA 2 (763 aa).

ATP-binding positions include Gln-83, 101–105 (GEGKT), and Asp-490.

Belongs to the SecA family. Monomer and homodimer. Part of the essential Sec protein translocation apparatus which comprises SecA, SecYEG and auxiliary proteins SecDF. Other proteins may also be involved.

The protein resides in the cell membrane. It is found in the cytoplasm. The catalysed reaction is ATP + H2O + cellular proteinSide 1 = ADP + phosphate + cellular proteinSide 2.. Its function is as follows. Part of the Sec protein translocase complex. Interacts with the SecYEG preprotein conducting channel. Has a central role in coupling the hydrolysis of ATP to the transfer of proteins into and across the cell membrane, serving as an ATP-driven molecular motor driving the stepwise translocation of polypeptide chains across the membrane. The protein is Protein translocase subunit SecA 2 of Corynebacterium glutamicum (strain R).